The chain runs to 168 residues: G/U mismatch-specific DNA glycosylase (168 aa).

It belongs to the uracil-DNA glycosylase (UDG) superfamily. TDG/mug family. As to quaternary structure, binds DNA as a monomer.

The protein resides in the cytoplasm. The enzyme catalyses Specifically hydrolyzes mismatched double-stranded DNA and polynucleotides, releasing free uracil.. Its function is as follows. Excises ethenocytosine and uracil, which can arise by alkylation or deamination of cytosine, respectively, from the corresponding mispairs with guanine in ds-DNA. It is capable of hydrolyzing the carbon-nitrogen bond between the sugar-phosphate backbone of the DNA and the mispaired base. The complementary strand guanine functions in substrate recognition. Required for DNA damage lesion repair in stationary-phase cells. The polypeptide is G/U mismatch-specific DNA glycosylase (Cronobacter sakazakii (strain ATCC BAA-894) (Enterobacter sakazakii)).